Consider the following 118-residue polypeptide: Elongin-B (118 aa).

Residue Met-1 is modified to N-acetylmethionine. The Ubiquitin-like domain occupies 1-66; it reads MDVFLMIRRH…LGECGFTSQT (66 aa). A Phosphothreonine modification is found at Thr-84. Residues 92–118 are disordered; sequence PFSSPPELPDVMKPQDSGSSANEQAVQ. Over residues 107-118 the composition is skewed to polar residues; sequence DSGSSANEQAVQ. Phosphoserine occurs at positions 108 and 111.

Belongs to the Elongin B family. As to quaternary structure, heterotrimer of an A (ELOA, ELOA2 or ELOA3P), ELOB and ELOC subunit. The elongin BC complex interacts with EPOP; leading to recruit the elongin BC complex to Polycomb group (PcG) target genes, thereby restricting excessive activity of the PRC2/EED-EZH2 complex. Component of multiple cullin-RING E3 ubiquitin-protein ligase complexes composed of Elongin BC (ELOB and ELOC), a cullin (either CUL2 or CUL5), a catalytic subunit (either RBX1 or RNF7/RBX2), as well as a substrate adapter protein that can be either ASB2, ASB9, ASB11, KLHDC2, KLHDC3, KLHDC10, APPBP2, FEM1A, FEM1B, FEM1C, LRR1, PCMTD1, SOCS1, SOCS2, SOCS5, SPSB1, SPSB3, ELOA, VHL, WSB1 or RAB40C. As part of the Elongin BC E3 ubiquitin ligase complex; interacts with NRBP1. May also interact with DCUN1D1, DCUN1D2, DCUN1D3 and DCUN1D5. May form oligomers as a KLHDC2/KLHDC3-ELOB-ELOC complex; this interaction is autoinhibitory for the E3 ligase complex as the substrate-binding site of KLHDC2/KLHDC3 is blocked in the oligomer. (Microbial infection) Following infection by HIV-1 virus, component of a cullin-5-RING E3 ubiquitin-protein ligase complex (ECS complex) hijacked by the HIV-1 Vif protein. In terms of assembly, (Microbial infection) Substrate adapter protein can be a viral protein such as HIV Vif. As to quaternary structure, (Microbial infection) Interacts with molluscum contagiosum virus MC132. (Microbial infection) Interacts with herpes virus 8 virus protein LANA1.

Its subcellular location is the nucleus. Its pathway is protein modification; protein ubiquitination. Functionally, SIII, also known as elongin, is a general transcription elongation factor that increases the RNA polymerase II transcription elongation past template-encoded arresting sites. Subunit A is transcriptionally active and its transcription activity is strongly enhanced by binding to the dimeric complex of the SIII regulatory subunits B and C (elongin BC complex). In embryonic stem cells, the elongin BC complex is recruited by EPOP to Polycomb group (PcG) target genes in order generate genomic region that display both active and repressive chromatin properties, an important feature of pluripotent stem cells. Its function is as follows. Core component of multiple cullin-2 and cullin-5-RING E3 ubiquitin-protein ligase complexes (ECS complexes), which mediate the ubiquitination of target proteins. By binding to BC-box motifs it seems to link target recruitment subunits, like VHL and members of the SOCS box family, to Cullin/RBX1 modules that activate E2 ubiquitination enzymes. Component the von Hippel-Lindau ubiquitination complex CBC(VHL). A number of ECS complexes (containing either KLHDC2, KLHDC3, KLHDC10, APPBP2, FEM1A, FEM1B or FEM1C as substrate-recognition component) are part of the DesCEND (destruction via C-end degrons) pathway, which recognizes a C-degron located at the extreme C terminus of target proteins, leading to their ubiquitination and degradation. The ECS(ASB9) complex mediates ubiquitination and degradation of CKB. As part of a multisubunit ubiquitin ligase complex, polyubiquitinates monoubiquitinated POLR2A. ECS(LRR1) ubiquitinates MCM7 and promotes CMG replisome disassembly by VCP and chromatin extraction during S-phase. As part of the ECS(RAB40C) complex, mediates ANKRD28 ubiquitination and degradation, thereby inhibiting protein phosphatase 6 (PP6) complex activity and focal adhesion assembly during cell migration. (Microbial infection) Following infection by HIV-1 virus, component of a cullin-5-RING E3 ubiquitin-protein ligase complex (ECS complex) hijacked by the HIV-1 Vif protein, which catalyzes ubiquitination and degradation of APOBEC3F and APOBEC3G. The complex can also ubiquitinate APOBEC3H to some extent. The protein is Elongin-B of Homo sapiens (Human).